The primary structure comprises 146 residues: Anti-sigma F factor (146 aa).

This sequence belongs to the anti-sigma-factor family.

It carries out the reaction L-seryl-[protein] + ATP = O-phospho-L-seryl-[protein] + ADP + H(+). The enzyme catalyses L-threonyl-[protein] + ATP = O-phospho-L-threonyl-[protein] + ADP + H(+). In terms of biological role, binds to sigma F and blocks its ability to form an RNA polymerase holoenzyme (E-sigma F). Phosphorylates SpoIIAA on a serine residue. This phosphorylation may enable SpoIIAA to act as an anti-anti-sigma factor that counteracts SpoIIAB and thus releases sigma F from inhibition. The polypeptide is Anti-sigma F factor (Halalkalibacterium halodurans (strain ATCC BAA-125 / DSM 18197 / FERM 7344 / JCM 9153 / C-125) (Bacillus halodurans)).